We begin with the raw amino-acid sequence, 245 residues long: 5'-nucleotidase SurE (245 aa).

Residues Asp8, Asp9, Ser39, and Asn91 each coordinate a divalent metal cation.

This sequence belongs to the SurE nucleotidase family. The cofactor is a divalent metal cation.

It is found in the cytoplasm. The catalysed reaction is a ribonucleoside 5'-phosphate + H2O = a ribonucleoside + phosphate. Functionally, nucleotidase that shows phosphatase activity on nucleoside 5'-monophosphates. In Herminiimonas arsenicoxydans, this protein is 5'-nucleotidase SurE.